We begin with the raw amino-acid sequence, 1063 residues long: Structural polyprotein (1063 aa).

Positions 1–131 are disordered; it reads MASTTPITME…LGPPTNPFQA (131 aa). Residues 30–69 are human C1QBP/SF2P32-binding; that stretch reads GASQSRRPRPPRQRDSSTSGDDSGRDSGGPRRRRGNRGRG. Phosphoserine; by host is present on Ser-46. The span at 70–87 shows a compositional bias: basic and acidic residues; that stretch reads QLRDWSRAPPPPEERQES. Pro residues predominate over residues 93-107; the sequence is APKPSRAPPQQPQPP. An intrachain disulfide couples Cys-153 to Cys-197. The functions as E2 signal peptide stretch occupies residues 279-300; it reads GAPQAFLAGLLLAAVAVGTARA. Residues 301–534 are Extracellular-facing; that stretch reads GLQPRADMAA…LWLATANALS (234 aa). Asn-353, Asn-371, Asn-410, and Asn-429 each carry an N-linked (GlcNAc...) asparagine; by host glycan. Residues 535-555 form a helical membrane-spanning segment; it reads LDHALAAFVLLVPWVLIFMVC. Topologically, residues 556–582 are cytoplasmic; the sequence is RRACRRRGAAAALTAVVLQGYNPPAYG. The tract at residues 563–582 is functions as E1 signal peptide; the sequence is GAAAALTAVVLQGYNPPAYG. The Extracellular portion of the chain corresponds to 583 to 1028; the sequence is EEAFTYLCTA…QTWAEWAAAH (446 aa). 8 disulfides stabilise this stretch: Cys-590–Cys-595, Cys-619–Cys-824, Cys-641–Cys-653, Cys-699–Cys-712, Cys-758–Cys-767, Cys-807–Cys-817, Cys-931–Cys-934, and Cys-950–Cys-983. Residue Asn-658 is glycosylated (N-linked (GlcNAc...) asparagine; by host). The Ca(2+) site is built by Asn-670 and Ala-671. Residues Asp-718 and Thr-719 each contribute to the Ca(2+) site. N-linked (GlcNAc...) asparagine; by host glycosylation is found at Asn-759 and Asn-791. O-linked (GalNAc...) threonine; by host glycans are attached at residues Thr-1011 and Thr-1012. Residues 1029–1049 form a helical membrane-spanning segment; it reads WWQLTLGAICALLLAGLLACC. Residues 1050 to 1063 are Extracellular-facing; the sequence is AKCLYYLRGAIAPR.

As to quaternary structure, homodimer; further assembles into homooligomer. Interacts with human C1QBP. Interacts (via N-terminus) with protease/methyltransferase p150. Heterodimer with spike glycoprotein E2. In terms of assembly, heterodimer with spike glycoprotein E1. Structural polyprotein: Specific enzymatic cleavages in vivo yield mature proteins. Two signal peptidase-mediated cleavages within the polyprotein produce the structural proteins capsid, E2, and E1. The E2 signal peptide remains attached to the C-terminus of the capsid protein after cleavage by the signal peptidase. Another signal peptide at E2 C-terminus directs E1 to the ER, with a similar mechanism. In terms of processing, contains three N-linked oligosaccharides. Post-translationally, capsid is phosphorylated on Ser-46 by host. This phosphorylation negatively regulates capsid protein RNA-binding activity. Dephosphorylated by human PP1A.

It is found in the virion. It localises to the host cytoplasm. The protein localises to the host mitochondrion. The protein resides in the virion membrane. Its subcellular location is the host Golgi apparatus membrane. In terms of biological role, capsid protein interacts with genomic RNA and assembles into icosahedric core particles 65-70 nm in diameter. The resulting nucleocapsid eventually associates with the cytoplasmic domain of E2 at the cell membrane, leading to budding and formation of mature virions from host Golgi membranes. Phosphorylation negatively regulates RNA-binding activity, possibly delaying virion assembly during the viral replication phase. Capsid protein dimerizes and becomes disulfide-linked in the virion. Modulates genomic RNA replication. Modulates subgenomic RNA synthesis by interacting with human C1QBP/SF2P32. Induces both perinuclear clustering of mitochondria and the formation of electron-dense intermitochondrial plaques, both hallmarks of rubella virus infected cells. Induces apoptosis when expressed in transfected cells. Responsible for viral attachment to target host cell, by binding to the cell receptor. Its transport to the plasma membrane depends on interaction with E1 protein. The surface glycoproteins display an irregular helical organization and a pseudo-tetrameric inner nucleocapsid arrangement. Its function is as follows. Class II viral fusion protein. Fusion activity is inactive as long as E1 is bound to E2 in mature virion. After virus attachment to target cell and clathrin-mediated endocytosis, acidification of the endosome would induce dissociation of E1/E2 heterodimer and concomitant trimerization of the E1 subunits. This E1 homotrimer is fusion active, and promotes release of viral nucleocapsid in cytoplasm after endosome and viral membrane fusion. The cytoplasmic tail of spike glycoprotein E1 modulates virus release. The surface glycoproteins display an irregular helical organization and a pseudo-tetrameric inner nucleocapsid arrangement. The protein is Structural polyprotein of Homo sapiens (Human).